Consider the following 635-residue polypeptide: Biosynthetic arginine decarboxylase (635 aa).

Lys-100 is modified (N6-(pyridoxal phosphate)lysine). A substrate-binding site is contributed by 282–292 (IDIGGGLGVDY).

Belongs to the Orn/Lys/Arg decarboxylase class-II family. SpeA subfamily. Mg(2+) is required as a cofactor. Requires pyridoxal 5'-phosphate as cofactor.

It catalyses the reaction L-arginine + H(+) = agmatine + CO2. The protein operates within amine and polyamine biosynthesis; agmatine biosynthesis; agmatine from L-arginine: step 1/1. Its function is as follows. Catalyzes the biosynthesis of agmatine from arginine. In Pelobacter propionicus (strain DSM 2379 / NBRC 103807 / OttBd1), this protein is Biosynthetic arginine decarboxylase.